Here is a 454-residue protein sequence, read N- to C-terminus: Bifunctional protein GlmU (454 aa).

Positions 1–225 (MNIVILAAGM…LWETLGVNSK (225 aa)) are pyrophosphorylase. UDP-N-acetyl-alpha-D-glucosamine contacts are provided by residues 6 to 9 (LAAG), Lys20, Gln71, 76 to 77 (GT), 98 to 100 (YGD), Gly135, Glu150, Asn165, and Asn223. A Mg(2+)-binding site is contributed by Asp100. Asn223 contributes to the Mg(2+) binding site. The linker stretch occupies residues 226 to 246 (VQLAEVERIHQRNLAQRLLET). The interval 247–454 (GVTLADPARI…WQRPVKKAKQ (208 aa)) is N-acetyltransferase. UDP-N-acetyl-alpha-D-glucosamine-binding residues include Arg329 and Lys347. His359 (proton acceptor) is an active-site residue. Tyr362 and Asn373 together coordinate UDP-N-acetyl-alpha-D-glucosamine. Acetyl-CoA is bound by residues Ala376, 382–383 (NY), Ser401, Ala419, and Arg436.

It in the N-terminal section; belongs to the N-acetylglucosamine-1-phosphate uridyltransferase family. In the C-terminal section; belongs to the transferase hexapeptide repeat family. As to quaternary structure, homotrimer. Mg(2+) is required as a cofactor.

The protein resides in the cytoplasm. The catalysed reaction is alpha-D-glucosamine 1-phosphate + acetyl-CoA = N-acetyl-alpha-D-glucosamine 1-phosphate + CoA + H(+). It catalyses the reaction N-acetyl-alpha-D-glucosamine 1-phosphate + UTP + H(+) = UDP-N-acetyl-alpha-D-glucosamine + diphosphate. The protein operates within nucleotide-sugar biosynthesis; UDP-N-acetyl-alpha-D-glucosamine biosynthesis; N-acetyl-alpha-D-glucosamine 1-phosphate from alpha-D-glucosamine 6-phosphate (route II): step 2/2. Its pathway is nucleotide-sugar biosynthesis; UDP-N-acetyl-alpha-D-glucosamine biosynthesis; UDP-N-acetyl-alpha-D-glucosamine from N-acetyl-alpha-D-glucosamine 1-phosphate: step 1/1. It functions in the pathway bacterial outer membrane biogenesis; LPS lipid A biosynthesis. Catalyzes the last two sequential reactions in the de novo biosynthetic pathway for UDP-N-acetylglucosamine (UDP-GlcNAc). The C-terminal domain catalyzes the transfer of acetyl group from acetyl coenzyme A to glucosamine-1-phosphate (GlcN-1-P) to produce N-acetylglucosamine-1-phosphate (GlcNAc-1-P), which is converted into UDP-GlcNAc by the transfer of uridine 5-monophosphate (from uridine 5-triphosphate), a reaction catalyzed by the N-terminal domain. This is Bifunctional protein GlmU from Cupriavidus pinatubonensis (strain JMP 134 / LMG 1197) (Cupriavidus necator (strain JMP 134)).